Consider the following 119-residue polypeptide: UPF0102 protein Nther_1376 (119 aa).

The protein belongs to the UPF0102 family.

This Natranaerobius thermophilus (strain ATCC BAA-1301 / DSM 18059 / JW/NM-WN-LF) protein is UPF0102 protein Nther_1376.